A 107-amino-acid polypeptide reads, in one-letter code: NADH-quinone oxidoreductase subunit K 2 (107 aa).

The next 3 membrane-spanning stretches (helical) occupy residues 3–23, 30–50, and 67–87; these read LPIY…LWGA, VRIL…LITF, and ILTL…LAII.

It belongs to the complex I subunit 4L family. NDH-1 is composed of 14 different subunits. Subunits NuoA, H, J, K, L, M, N constitute the membrane sector of the complex.

The protein localises to the cell membrane. It catalyses the reaction a quinone + NADH + 5 H(+)(in) = a quinol + NAD(+) + 4 H(+)(out). Functionally, NDH-1 shuttles electrons from NADH, via FMN and iron-sulfur (Fe-S) centers, to quinones in the respiratory chain. The immediate electron acceptor for the enzyme in this species is believed to be a menaquinone. Couples the redox reaction to proton translocation (for every two electrons transferred, four hydrogen ions are translocated across the cytoplasmic membrane), and thus conserves the redox energy in a proton gradient. In Symbiobacterium thermophilum (strain DSM 24528 / JCM 14929 / IAM 14863 / T), this protein is NADH-quinone oxidoreductase subunit K 2.